The sequence spans 278 residues: uncharacterized protein (278 aa).

Residues 1–32 (MSSASFTTKALSVLAALTAASAPLVAASPAHA) form the signal peptide. One can recognise a Peptidase S1 domain in the interval 33–236 (LANARNVTGS…HAEWIAYYTG (204 aa)). An intrachain disulfide couples cysteine 59 to cysteine 75. Active-site charge relay system residues include histidine 74, aspartate 123, and serine 189.

It belongs to the peptidase S1 family.

The protein resides in the secreted. This is an uncharacterized protein from Corynebacterium glutamicum (strain R).